A 405-amino-acid chain; its full sequence is Probable dual-specificity RNA methyltransferase RlmN (405 aa).

Low complexity predominate over residues 1 to 15 (MSSTGSSVSTSGLVL). A disordered region spans residues 1–34 (MSSTGSSVSTSGLVLPSTPLAEPGKEVPLVVNTP). Glu-130 (proton acceptor) is an active-site residue. The region spanning 142–386 (SAARATLCLS…VTVRDTRGSE (245 aa)) is the Radical SAM core domain. Residues Cys-149 and Cys-391 are joined by a disulfide bond. [4Fe-4S] cluster is bound by residues Cys-156, Cys-160, and Cys-163. S-adenosyl-L-methionine-binding positions include 211–212 (GE), Ser-245, 268–270 (SLH), and Asn-348. The active-site S-methylcysteine intermediate is Cys-391.

The protein belongs to the radical SAM superfamily. RlmN family. [4Fe-4S] cluster is required as a cofactor.

It localises to the cytoplasm. It catalyses the reaction adenosine(2503) in 23S rRNA + 2 reduced [2Fe-2S]-[ferredoxin] + 2 S-adenosyl-L-methionine = 2-methyladenosine(2503) in 23S rRNA + 5'-deoxyadenosine + L-methionine + 2 oxidized [2Fe-2S]-[ferredoxin] + S-adenosyl-L-homocysteine. The enzyme catalyses adenosine(37) in tRNA + 2 reduced [2Fe-2S]-[ferredoxin] + 2 S-adenosyl-L-methionine = 2-methyladenosine(37) in tRNA + 5'-deoxyadenosine + L-methionine + 2 oxidized [2Fe-2S]-[ferredoxin] + S-adenosyl-L-homocysteine. Its function is as follows. Specifically methylates position 2 of adenine 2503 in 23S rRNA and position 2 of adenine 37 in tRNAs. The protein is Probable dual-specificity RNA methyltransferase RlmN of Cutibacterium acnes (strain DSM 16379 / KPA171202) (Propionibacterium acnes).